An 863-amino-acid chain; its full sequence is Ubiquitin carboxyl-terminal hydrolase 13 (863 aa).

A Phosphoserine; by AURKB modification is found at Ser-114. Thr-122 carries the post-translational modification Phosphothreonine. The UBP-type; degenerate zinc-finger motif lies at 187-295 (PVSKYANNLT…KHLAHFGIDM (109 aa)). Zn(2+) contacts are provided by Cys-211, Cys-214, Cys-231, and His-244. Lys-311 is covalently cross-linked (Glycyl lysine isopeptide (Lys-Gly) (interchain with G-Cter in SUMO2)). Residues 336-861 (TGLKNLGNSC…LGYMYFYRRI (526 aa)) enclose the USP domain. Cys-345 serves as the catalytic Nucleophile. A Glycyl lysine isopeptide (Lys-Gly) (interchain with G-Cter in SUMO2) cross-link involves residue Lys-405. 2 consecutive UBA domains span residues 652-693 (DIDE…IIVH) and 727-767 (QPPE…IFSH). His-823 (proton acceptor) is an active-site residue.

It belongs to the peptidase C19 family. Interacts with UFD1. Interacts (via UBA domains) with SIAH2 (when ubiquitinated). Interacts with BAG6; the interaction is direct and may mediate UBL4A deubiquitination. Interacts (via UBA 2 domain) with AMFR; the interaction is direct. Interacts with UBL4A; may be indirect via BAG6. Interacts with NEDD4. Phosphorylated by AURKB at Ser-114; leading to stabilization of cell cycle proteins such as SKP2 and AURKB, but not MCL1. Highly expressed in ovary and testes.

It is found in the cytoplasm. It carries out the reaction Thiol-dependent hydrolysis of ester, thioester, amide, peptide and isopeptide bonds formed by the C-terminal Gly of ubiquitin (a 76-residue protein attached to proteins as an intracellular targeting signal).. Its activity is regulated as follows. Specifically inhibited by spautin-1 (specific and potent autophagy inhibitor-1), a derivative of MBCQ that binds to USP13 and inhibits deubiquitinase activity. Regulated by PIK3C3/VPS34-containing complexes. The weak deubiquitinase activity in vitro suggests the existence of some mechanism that activates the enzyme. Functionally, deubiquitinase that mediates deubiquitination of target proteins such as BECN1, MITF, SKP2 and USP10 and is involved in various processes such as autophagy, endoplasmic reticulum-associated degradation (ERAD), cell cycle progression or DNA damage response. Component of a regulatory loop that controls autophagy and p53/TP53 levels: mediates deubiquitination of BECN1, a key regulator of autophagy, leading to stabilize the PIK3C3/VPS34-containing complexes. Alternatively, forms with NEDD4 a deubiquitination complex, which subsequently stabilizes VPS34 to promote autophagy. Also deubiquitinates USP10, an essential regulator of p53/TP53 stability. In turn, PIK3C3/VPS34-containing complexes regulate USP13 stability, suggesting the existence of a regulatory system by which PIK3C3/VPS34-containing complexes regulate p53/TP53 protein levels via USP10 and USP13. Recruited by nuclear UFD1 and mediates deubiquitination of SKP2, thereby regulating endoplasmic reticulum-associated degradation (ERAD). Also regulates ERAD through the deubiquitination of UBL4A a component of the BAG6/BAT3 complex. Mediates stabilization of SIAH2 independently of deubiquitinase activity: binds ubiquitinated SIAH2 and acts by impairing SIAH2 autoubiquitination. Regulates the cell cycle progression by stabilizing cell cycle proteins such as SKP2 and AURKB. In addition, plays an important role in maintaining genomic stability and in DNA replication checkpoint activation via regulation of RAP80 and TOPBP1. Deubiquitinates the multifunctional protein HMGB1 and subsequently drives its nucleocytoplasmic localization and its secretion. Positively regulates type I and type II interferon signalings by deubiquitinating STAT1 but negatively regulates antiviral response by deubiquitinating STING1. The protein is Ubiquitin carboxyl-terminal hydrolase 13 (USP13) of Homo sapiens (Human).